Here is a 439-residue protein sequence, read N- to C-terminus: Ribonuclease R (439 aa).

Residues 1–22 form a disordered region; it reads MPETQEPASLNERDPMFEREKE. Positions 11-22 are enriched in basic and acidic residues; it reads NERDPMFEREKE. The RNB domain maps to 271–439; it reads RRDLRDLPLV…ARERRGTIEF (169 aa).

This sequence belongs to the RNR ribonuclease family. RNase R subfamily.

It localises to the cytoplasm. It catalyses the reaction Exonucleolytic cleavage in the 3'- to 5'-direction to yield nucleoside 5'-phosphates.. Functionally, 3'-5' exoribonuclease that releases 5'-nucleoside monophosphates and is involved in maturation of structured RNAs. The sequence is that of Ribonuclease R (rnr) from Acidithiobacillus ferrooxidans (Thiobacillus ferrooxidans).